The following is a 264-amino-acid chain: Movement protein (264 aa).

The segment at Pro219–Thr264 is disordered. The span at Arg231–Asn240 shows a compositional bias: basic residues.

This sequence belongs to the tobamovirus movement protein family.

Its subcellular location is the host cytoplasm. The protein resides in the host cytoskeleton. The protein localises to the host cell junction. It localises to the host plasmodesma. In terms of biological role, transports viral genome to neighboring plant cells directly through plasmosdesmata, without any budding. The movement protein allows efficient cell to cell propagation, by bypassing the host cell wall barrier. Forms a ribonucleoprotein complex with viral RNA. Binds microtubules and modulates microtubule stability. Can bind double-stranded DNA. The sequence is that of Movement protein (MP) from Cucumber green mottle mosaic virus (strain watermelon SH) (CGMMV).